Reading from the N-terminus, the 507-residue chain is Cobyric acid synthase (507 aa).

Residues 249–451 (DIEIAVINLP…IHGIFENREF (203 aa)) form the GATase cobBQ-type domain. The active-site Nucleophile is the cysteine 330. Residue histidine 443 is part of the active site.

It belongs to the CobB/CobQ family. CobQ subfamily.

Its pathway is cofactor biosynthesis; adenosylcobalamin biosynthesis. Functionally, catalyzes amidations at positions B, D, E, and G on adenosylcobyrinic A,C-diamide. NH(2) groups are provided by glutamine, and one molecule of ATP is hydrogenolyzed for each amidation. The protein is Cobyric acid synthase of Thermoanaerobacter sp. (strain X514).